Consider the following 2443-residue polypeptide: MVSAIEPIAIVGTGCRFPGNCSSSARLWELLRSPQNVASKVPADRFNVDAFYHPDGTHHGTTNVKEGYFLKEDVRAFDASFFNISPTEAASMDPQQRLLLETVYESLESAGLQMEALQGSSTGVFCGFLRNDYSQIQTTDRDALPAYMVTGNSPSIMANRVSYFFDWKGPSFGMDTGCSSSLLAVHLAVEALHRGDCSMAMAVGSNLILSPTPFIADSATGMLSPTGRSRMWDESADGYARGEGVAAVVLKRLSDALADGDEIECLIRATAANADGRTMGITMPNGNAQQELIHNTYTKAGLDPKNSEGRCQYFEAHGTGTQAGDPQEAGAIFNAFFGDSPTTDLKAEEKLYVGSIKTVIGHTEATAGLAGLIKASLCLQHSEIVPNMLLERLNPKLSSFMSCLHVPTENMPWPKLPAGAPRRASVNSFGFGGANVHAILESYDAPATSPPTHSLPFILPFTFSAASERSLGAVLQQHGRYLQDAKEEHLLDLAATLGNRRSVFSHRVNLTASSLEDLRSKVQHEIEQNTTEYSSTVICRSKARSHSVLGVFTGQGAQWPQMGLDLIMACPEARMWIDEMQESLNRLPAEYRPNFVMMDELSKPKDKSRVHEAAISQPLRTAIQIIQVNFLRALGISFTAVVGHSSGEVAAAYAAGLLNSSDAIRIAYLRGNVAKYAGSTGQQGAMMAVGLSGGDADAICSQESYVGRVSVAAYNSPSSVTLSGDQDVLTELEWLLRSLGRQVKVLRVDTAYHSHHMLPCAEPYLKALKKCNISIQRPQTSRWFSSVFNGREMMSDDDSLQGEYWKENMVHSVEFSQAMAMAVDQISGPDLIMEVGPHPALKGPAIETLSTIQTDTQIPYIGLTKRDSSSIECFAAAIGSLWTYLESGCMDLPKYVSLFDPAYHLKFVKDLPSYPFDHREQFWAESRLSKAVSHRSNPPNCLLGVLSPDSGKEEQVWRGYLRRDSLQWLIGYEIRSLPLFPPSGYISLALESAKLIAGQEQLQLLEVQDLAIENDLPIADNTTGVEIVFKVGSLRTNGKHIHGTFNCQAGVSGKLISCASGVLTMTLGSADAAALPARRSSLPDMRAVDIEDFYSALTRLGHLYSEDFKCLKALSRRRDGACGSALNSIERKPGSPLLHPATAETSFQVLMAALENPSNSQSSILYRPTLIRRTVINLALCDSPELMLDASILHVEPEGIHGVVDVFNSTGQGVMQLEGVHLVPLLEDLADVHSATLFSETVWGPVKLDATLGASDCAPNVASSLELRERLTFLHLRNIGDQLSLKARQNLDKPRAFFVAWMDHVLAAVRDNDHPTCRSEWLGENLQHFLSIDHGLHQSELLAMDKICRSISARLLCMGDTQEDVFVNEALAEYYQTSREFSSLCDRLVKVVGQILFLFPRLNVLEVRRGTDLVTKRLLREFGHAFHSYTCTDTSDVPPARKESQNAQSKRLISYTSLDLCDDIVVQGYQEHSQDLVVITNSGHGSCSLPVTISNMRRLLKPGGYIVIIETTNPTLVYPKFFSGTPQNWKESVRTRSEWNTLLLSGGFSGIDTANPAHEAAILNMSLFVSQAVDDQIQLLRSPLSMCSAVANQDLFFVCETNDDMEPLRNSLYGLLKPRFNHIVSAENLDAMEFEGFCAPTVLVLTYKNDSWFQTITNEQCRASIQKTFKAAGKLLWVTVDAQVDPYRAMTNGMLRSISLEYPSVTFQHLEIPNPNAVSFKILATALMRLVHTKFENNCRLSGVVTATEPEVRYVDGAFLVPRQQTSSFPNKRYLAHTHVVDGDVGIEHILIEPTKPERLDSPVRVVAHSTTSSYSPQSPRVTLRVQYSTLRAVRVDTAGYLYLVVGRDVQSQSRFLAVTDKNAGLISIDVLRTRPIPSWIPEGQEDDLLLFITCALIAEQILSEVHPGTSLLVHEPDSALYQALATAAPLHMIEVFFSTSKSPPANGMMFIHKNVSSLALSRQLPSDLSVIAASASSSGTLFRRATSLLRKDIRQVDIDNFFRASPQTRQVQVSDLRGIAHALKQTRALHDTRASVTEVDAISGHPGALDNLEIVDWTASKPIPAQIRSASSHVSLSAAKSYLLLAMQKDLAVSVSEWMVARGARHVVLAGTASDINVDKGWVEEMASRGACIHCLPTDISERQSVLLLERFTCALPPAGGIIYGALARLPADNLFPMARQNRDVSPITSLLESSILLDELYNHPAMDFFIFVGSLSGQFNHANMVECAAASEFSSALIRRRRSRSFSGSIVFMSQIPDPKSESKFLGEKYLSEHDLDEVFAESILAGDPNSTGNHEITAGLRPIKPEHTEMSWNRIPKMWNFVQHLAEFNSVSPSHSEVITMSVLLERATSQREVTEILTSHLLTQLRTKLGLSTEAVLVPETQLSELGVDSLVAADLRTWFLKELSVDVPILFMLSGSSIQEITSSAAAKLDASRIPHAQ.

Residues 5–442 enclose the Ketosynthase family 3 (KS3) domain; that stretch reads IEPIAIVGTG…GANVHAILES (438 aa). Residues Cys-178, His-317, and His-362 each act as for beta-ketoacyl synthase activity in the active site. Positions 550-885 are malonyl-CoA:ACP transacylase (MAT) domain; sequence GVFTGQGAQW…AAIGSLWTYL (336 aa). The active-site For acyl/malonyl transferase activity is Ser-645. Residues 940–1070 are N-terminal hotdog fold; sequence NCLLGVLSPD…GVLTMTLGSA (131 aa). The PKS/mFAS DH domain maps to 940-1231; the sequence is NCLLGVLSPD…LVPLLEDLAD (292 aa). The interval 989-1497 is product template (PT) domain; the sequence is ALESAKLIAG…SLPVTISNMR (509 aa). The interval 1085 to 1231 is C-terminal hotdog fold; the sequence is MRAVDIEDFY…LVPLLEDLAD (147 aa). The interval 1771-2159 is methyltransferase (CMeT) domain; it reads NKRYLAHTHV…LERFTCALPP (389 aa). Residues 2359-2434 form the Carrier domain; it reads EILTSHLLTQ…EITSSAAAKL (76 aa). Residue Ser-2394 is modified to O-(pantetheine 4'-phosphoryl)serine.

It catalyses the reaction nicotinyl-CoA + 2 malonyl-CoA + H(+) = 4-hydroxy-6-(pyridin-3-yl)-2H-pyran-2-one + 2 CO2 + 3 CoA. The protein operates within secondary metabolite biosynthesis; terpenoid biosynthesis. In terms of biological role, non-reducing polyketide synthase; part of the gene cluster that mediates the biosynthesis of 15-deoxyoxalicine B. The first step of the pathway is the synthesis of nicotinyl-CoA from nicotinic acid by the nicotinic acid-CoA ligase olcI. Nicotinyl-CoA is then a substrate of polyketide synthase olcA to produce 4-hydroxy-6-(3-pyridinyl)-2H-pyran-2-one (HPPO) which is further prenylated by the polyprenyl transferase olcH to yield geranylgeranyl-HPPO. Geranylgeranyl pyrophosphate is provided by the cluster-specific geranylgeranyl pyrophosphate synthase olcC. The FAD-dependent monooxygenase olcE catalyzes the epoxidation of geranylgeranyl-HPPO and the terpene cyclase olcD catalyzes the cyclization of the terpenoid component, resulting in the formation of the tricyclic terpene moiety seen in predecaturin E. The cytochrome P450 monooxygenase then catalyzes the allylic oxidation of predecaturin E, which is followed by spirocylization with concomitant loss of one molecule of water to form decaturin E. Decaturin E is the substrate of the cytochrome P450 monooxygenase olcJ which hydroxylates it at the C-29 position to form decaturin F. The short-chain dehydrogenase/reductase olcF may catalyze the oxidation of decaturin F to generate the 29-hydroxyl-27-one intermediate, and subsequent hemiacetal formation probably leads to the formation of decaturin C. The dioxygenase olcK may be a peroxisomal enzyme that catalyzes the hydroxylation of decaturin C into decaturin A once decaturin C is shuttled into the peroxisome by the MFS transporter olcL. Finally the cytochrome P450 monooxygenase olcB catalyzes the oxidative rearrangement to yield 15-deoxyoxalicine B. In the absence of olcJ, decaturin E may be shunted to a pathway in which it is oxidized to a ketone, possibly by olcF, to form decaturin D, which undergoes further allylic oxidation to yield decaturin G. Moreover, in the absence of oclK or oclL, oclB can convert decaturin C into 15-deoxyoxalicine A. In Penicillium canescens, this protein is Non-reducing polyketide synthase olcA.